A 239-amino-acid polypeptide reads, in one-letter code: Transcriptional regulatory protein RstA (239 aa).

The 114-residue stretch at 3 to 116 (TIVFVEDDAE…VLLARLRLHL (114 aa)) folds into the Response regulatory domain. D52 is subject to 4-aspartylphosphate. The ompR/PhoB-type DNA-binding region spans 136–235 (YKALHFGTLT…VRNKGYLFAP (100 aa)).

Phosphorylated by RstB.

The protein localises to the cytoplasm. Member of the two-component regulatory system RstB/RstA. This is Transcriptional regulatory protein RstA (rstA) from Escherichia coli (strain K12).